Consider the following 1182-residue polypeptide: Intraflagellar transport protein 122 homolog (1182 aa).

8 WD repeats span residues 10-50 (KAEQ…QPLK), 51-91 (GHKD…LKYT), 93-129 (NDSI…VSKH), 131-169 (SSSK…KVKI), 174-217 (GSLS…IGKD), 219-258 (PLNF…LGTV), 260-300 (EQNS…HGLY), and 453-492 (KQAT…LLFQ).

In terms of assembly, component of the IFT complex A (IFT-A) complex. IFT-A complex is divided into a core subcomplex composed of IFT122:IFT140:WDR19 which is associated with TULP3 and a peripheral subcomplex composed of IFT43:WDR35:TTC21B. Interacts with IFT43:WDR35; the interaction connects the 2 IFT-A subcomplexes. Interacts with IFTAP; the interaction associates IFTAP with IFT-A complex.

The protein localises to the cell projection. It localises to the cilium. Its subcellular location is the cytoplasm. The protein resides in the cytoskeleton. It is found in the cilium basal body. In terms of biological role, as a component of the IFT complex A (IFT-A), a complex required for retrograde ciliary transport and entry into cilia of G protein-coupled receptors (GPCRs), it is required in ciliogenesis and ciliary protein trafficking. Involved in cilia formation during neuronal patterning. Acts as a negative regulator of Shh signaling. Required to recruit TULP3 to primary cilia. This chain is Intraflagellar transport protein 122 homolog, found in Mus musculus (Mouse).